A 432-amino-acid chain; its full sequence is Adenylosuccinate synthetase (432 aa).

GTP-binding positions include 13–19 and 41–43; these read GDEGKGK and GHT. Asp14 functions as the Proton acceptor in the catalytic mechanism. Residues Asp14 and Gly41 each contribute to the Mg(2+) site. IMP is bound by residues 14 to 17, 39 to 42, Thr130, Arg144, Gln225, Thr240, and Arg304; these read DEGK and NAGH. His42 (proton donor) is an active-site residue. Residue 300–306 participates in substrate binding; sequence STTGRPR. Residues Arg306, 332-334, and 416-418 contribute to the GTP site; these read KLD and STG.

It belongs to the adenylosuccinate synthetase family. Homodimer. Requires Mg(2+) as cofactor.

It localises to the cytoplasm. It carries out the reaction IMP + L-aspartate + GTP = N(6)-(1,2-dicarboxyethyl)-AMP + GDP + phosphate + 2 H(+). Its pathway is purine metabolism; AMP biosynthesis via de novo pathway; AMP from IMP: step 1/2. In terms of biological role, plays an important role in the de novo pathway of purine nucleotide biosynthesis. Catalyzes the first committed step in the biosynthesis of AMP from IMP. The polypeptide is Adenylosuccinate synthetase (Nitrosomonas eutropha (strain DSM 101675 / C91 / Nm57)).